We begin with the raw amino-acid sequence, 148 residues long: Lipoprotein MlpH (148 aa).

Positions Met-1–Gly-17 are cleaved as a signal peptide. A lipid anchor (N-palmitoyl cysteine) is attached at Cys-18. Cys-18 carries S-diacylglycerol cysteine lipidation. The segment at Leu-26–Lys-61 is disordered. A compositionally biased stretch (basic and acidic residues) spans Asp-40–Lys-61.

It belongs to the Multicopy lipoprotein (Mlp) family.

The protein resides in the cell outer membrane. Functionally, an outer membrane protein that may participate in pathogenesis. Some human Lyme disease patients have antibodies against this protein. The Mlp proteins probably undergo intragenic recombination, generating new alleles. In Borreliella burgdorferi (strain ATCC 35210 / DSM 4680 / CIP 102532 / B31) (Borrelia burgdorferi), this protein is Lipoprotein MlpH.